The chain runs to 302 residues: GTP cyclohydrolase FolE2 (302 aa).

Belongs to the GTP cyclohydrolase IV family.

The catalysed reaction is GTP + H2O = 7,8-dihydroneopterin 3'-triphosphate + formate + H(+). Its pathway is cofactor biosynthesis; 7,8-dihydroneopterin triphosphate biosynthesis; 7,8-dihydroneopterin triphosphate from GTP: step 1/1. Converts GTP to 7,8-dihydroneopterin triphosphate. This Pseudoalteromonas translucida (strain TAC 125) protein is GTP cyclohydrolase FolE2.